Consider the following 108-residue polypeptide: Small ribosomal subunit protein bS16 (108 aa).

It belongs to the bacterial ribosomal protein bS16 family.

In Orientia tsutsugamushi (strain Boryong) (Rickettsia tsutsugamushi), this protein is Small ribosomal subunit protein bS16.